We begin with the raw amino-acid sequence, 344 residues long: FCS-Like Zinc finger 10 (344 aa).

An FLZ-type zinc finger spans residues Asp-270–Glu-314. Residues Leu-309–Glu-320 are compositionally biased toward acidic residues. Residues Leu-309–Gly-344 form a disordered region.

Belongs to the FLZ family. As to quaternary structure, interacts with KIN10 and KIN11 via its FLZ-type zinc finger domain. Interacts with KINB1, KINB2 and KINB3 via its N-terminal part. Forms homodimer and heterodimer with FLZ2 and FLZ12 in vitro. Early expressed in hypocotyl and cotyledon and preferentially in the stelar region of the shoot and root. Later expressed in root-shoot junction, lateral root, old or senescing leaves and in pistil and pollen of flower buds or open flowers.

It is found in the cytoplasm. Its subcellular location is the nucleus. The protein resides in the endoplasmic reticulum. In terms of biological role, may act as an adapter to facilitate the interaction of SnRK1 complex with effector proteins, conferring tissue- and stimulus-type specific differences in the SnRK1 regulation pathway. Negatively regulates KIN10 leading to a repression of the SnRK1 signaling pathway. In Arabidopsis thaliana (Mouse-ear cress), this protein is FCS-Like Zinc finger 10.